The primary structure comprises 149 residues: Ribonuclease H (149 aa).

One can recognise an RNase H type-1 domain in the interval 1–143 (MNAVEIYTDG…ADMLANRGVE (143 aa)). D9, E47, D69, and D135 together coordinate Mg(2+).

This sequence belongs to the RNase H family. Monomer. The cofactor is Mg(2+).

Its subcellular location is the cytoplasm. The catalysed reaction is Endonucleolytic cleavage to 5'-phosphomonoester.. Its function is as follows. Endonuclease that specifically degrades the RNA of RNA-DNA hybrids. This is Ribonuclease H from Albidiferax ferrireducens (strain ATCC BAA-621 / DSM 15236 / T118) (Rhodoferax ferrireducens).